A 296-amino-acid chain; its full sequence is MESECLTPEWASQPCLMGIDEAGRGPVLGPMVYGCMYCPISYQSSLASLHFADSKTLKEEKREELYESLKLDKSLGWAVDVIDPRELSAKMLAKNKTNLNEISHNSAMGLIKRVLDMGVLLTEAYLDTVGDPDKYRIKLSERFPSIKFVVSKKADSLFPIVSGASIVAKVTRDRALKEWLVEETGEDINRNFGSGYPGDPETKAWLVQHKHSVFGFPSLVRFSWGTCTTHLKGEVEVAWEADENEESGNGSSSKRQAKLSSFGFKTCEKRSEEIESSGKGRCKFLQARKIQQLTQF.

Positions 14 to 236 (PCLMGIDEAG…CTTHLKGEVE (223 aa)) constitute an RNase H type-2 domain. A divalent metal cation-binding residues include aspartate 20, glutamate 21, and aspartate 127.

It belongs to the RNase HII family. Eukaryotic subfamily. Mn(2+) serves as cofactor. Requires Mg(2+) as cofactor.

The catalysed reaction is Endonucleolytic cleavage to 5'-phosphomonoester.. Functionally, catalytic subunit of RNase HII, an endonuclease that specifically degrades the RNA of RNA:DNA hybrids. Participates in DNA replication, possibly by mediating the removal of lagging-strand Okazaki fragment RNA primers during DNA replication. Mediates the excision of single ribonucleotides from DNA:RNA duplexes. The sequence is that of Ribonuclease H2 subunit A from Arabidopsis thaliana (Mouse-ear cress).